The chain runs to 130 residues: Protein ApaG (130 aa).

An ApaG domain is found at 3–127 (RALTRDIEVT…FSLDSPGLMR (125 aa)).

The chain is Protein ApaG from Agrobacterium fabrum (strain C58 / ATCC 33970) (Agrobacterium tumefaciens (strain C58)).